Reading from the N-terminus, the 352-residue chain is Elongation factor Tu, mitochondrial (352 aa).

One can recognise a tr-type G domain in the interval 45–241 (RPHVNVGTIG…AIDTHIPLPH (197 aa)). Residues 54–61 (GHVDHGKT) form a G1 region. Residues D57, G59, K60, T61, and T62 each coordinate GTP. T61 provides a ligand contact to Mg(2+). The G2 stretch occupies residues 95 to 99 (GITIN). Positions 116-119 (DCPG) are G3. The GTP site is built by N171, D174, S209, A210, and L211. The G4 stretch occupies residues 171–174 (NKAD). The interval 209–211 (SAL) is G5.

The protein resides in the mitochondrion. It carries out the reaction GTP + H2O = GDP + phosphate + H(+). Its function is as follows. GTP hydrolase that promotes the GTP-dependent binding of aminoacyl-tRNA to the A-site of ribosomes during protein biosynthesis. In Gallus gallus (Chicken), this protein is Elongation factor Tu, mitochondrial.